The chain runs to 2324 residues: Myomegalin (2324 aa).

4 coiled-coil regions span residues 41 to 132 (REDV…LVEA), 158 to 205 (QVKL…LLEE), 238 to 288 (DSHL…SLKE), and 348 to 638 (LFCS…NKQA). Disordered stretches follow at residues 72–96 (TWADEEDLNSQNEAELRRQVEEPQQ) and 205–240 (EPGGMEVQPMPKGLPTQQKPDLNETPTTQPSVSDSH). Over residues 85–96 (AELRRQVEEPQQ) the composition is skewed to basic and acidic residues. Polar residues predominate over residues 219-238 (PTQQKPDLNETPTTQPSVSD). The tract at residues 701-747 (PAGATSVGPHHGEQTDQGSTQMPSRDDSTSLTAREEASIPRSTLGDS) is disordered. Residue T705 is modified to Phosphothreonine. The span at 724–738 (SRDDSTSLTAREEAS) shows a compositional bias: basic and acidic residues. Coiled coils occupy residues 745 to 822 (GDSD…QLVD), 855 to 923 (ENRR…EEVL), and 1011 to 1043 (LRAEIHQPLEEKRKAEAELKELKAQIEEAGFSS). 2 disordered regions span residues 1155–1182 (LPSSEKHQHQEQENMTARPGPRPQSLKL) and 1195–1216 (NKSQAQDSGHQPEFSLPGSTKH). Coiled-coil stretches lie at residues 1213–1241 (STKHLRSQLAQCRQRYQDLQEKLLISEAT), 1346–1384 (TSDDSSLLRKDIRDLKAQLQNAYKVIQNLRSRVRSLSAT), and 1430–1455 (GLQAKKNLENLIQRVSQLEAQLPKTG). 6 disordered regions span residues 1540 to 1559 (TDRLTSKFSTKDHKSEKEEA), 1589 to 1610 (RFSSPPSSHAASDSHRSASSTS), 1628 to 1685 (YTHY…IPKP), 1742 to 1773 (APPTSTSTLLSNHTEASSPRYSNPAQPHSPAR), 1857 to 1877 (LSSTARENGSTSHFYSQGLES), and 2081 to 2140 (NQQP…TPPK). The region spanning 1550-1641 (KDHKSEKEEA…EEKKPSPSNS (92 aa)) is the Olduvai domain. Low complexity-rich tracts occupy residues 1591–1610 (SSPPSSHAASDSHRSASSTS) and 1637–1646 (SPSNSAASAS). Positions 1743 to 1767 (PPTSTSTLLSNHTEASSPRYSNPAQ) are enriched in polar residues. Residues 1821 to 2056 (GADLLEEHLG…LRLQLEQQMD (236 aa)) are a coiled coil. Polar residues-rich tracts occupy residues 2081–2090 (NQQPPFQGSA) and 2108–2135 (PSNSCSVPGSDSAIISRTNNGSDESAAT). Residues 2248-2274 (EEGNLMEKELLDLRAQVSQQQQLLQST) adopt a coiled-coil conformation.

As to quaternary structure, interacts with PDE4D. May interact with MAPRE1 and MAPRE3. May form a pericentrosomal complex with AKAP9, CDK5RAP2 and EB1/MAPRE1 in an isoform-specific manner; within this complex, may mediate MAPRE1-binding to CDK5RAP2. Interaction with AKAP9 stabilizes both proteins. May interact with CAMSAP2 in an isoform-specific manner; this interaction is much stronger in the presence of AKAP9. In complex with AKAP9, recruits CAMSAP2 to the Golgi apparatus. May interact with unglycosylated LGALS3BP in an isoform-specific manner; this interaction may connect the pericentrosomal complex to the gamma-tubulin ring complex (gamma-TuRC) to promote microtubule assembly and acetylation. In terms of tissue distribution, abundantly expressed in heart and skeletal muscle and to a lower extent in brain, lung and liver. Expressed in heart, skeletal muscle and testis (at protein level).

The protein localises to the cytoplasm. It is found in the cytoskeleton. Its subcellular location is the microtubule organizing center. It localises to the centrosome. The protein resides in the golgi apparatus. Functions as an anchor sequestering components of the cAMP-dependent pathway to Golgi and/or centrosomes. May participate in microtubule dynamics, promoting microtubule assembly, in an isoform-specific manner. Depending upon the cell context, may act at the level of the Golgi apparatus or that of the centrosome. In complex with AKAP9, recruits CAMSAP2 to the Golgi apparatus and tethers non-centrosomal minus-end microtubules to the Golgi, an important step for polarized cell movement. In complex with AKAP9, EB1/MAPRE1 and CDK5RAP2, contributes to microtubules nucleation and extension from the centrosome to the cell periphery, a crucial process for directed cell migration, mitotic spindle orientation and cell-cycle progression. The protein is Myomegalin (Pde4dip) of Rattus norvegicus (Rat).